Reading from the N-terminus, the 567-residue chain is Dihydroxy-acid dehydratase (567 aa).

Cys52 serves as a coordination point for [2Fe-2S] cluster. Asp84 contacts Mg(2+). A [2Fe-2S] cluster-binding site is contributed by Cys125. Asp126 and Lys127 together coordinate Mg(2+). The residue at position 127 (Lys127) is an N6-carboxylysine. Position 197 (Cys197) interacts with [2Fe-2S] cluster. Glu448 serves as a coordination point for Mg(2+). Ser474 serves as the catalytic Proton acceptor.

Belongs to the IlvD/Edd family. Homodimer. [2Fe-2S] cluster is required as a cofactor. The cofactor is Mg(2+).

The catalysed reaction is (2R)-2,3-dihydroxy-3-methylbutanoate = 3-methyl-2-oxobutanoate + H2O. The enzyme catalyses (2R,3R)-2,3-dihydroxy-3-methylpentanoate = (S)-3-methyl-2-oxopentanoate + H2O. Its pathway is amino-acid biosynthesis; L-isoleucine biosynthesis; L-isoleucine from 2-oxobutanoate: step 3/4. It participates in amino-acid biosynthesis; L-valine biosynthesis; L-valine from pyruvate: step 3/4. In terms of biological role, functions in the biosynthesis of branched-chain amino acids. Catalyzes the dehydration of (2R,3R)-2,3-dihydroxy-3-methylpentanoate (2,3-dihydroxy-3-methylvalerate) into 2-oxo-3-methylpentanoate (2-oxo-3-methylvalerate) and of (2R)-2,3-dihydroxy-3-methylbutanoate (2,3-dihydroxyisovalerate) into 2-oxo-3-methylbutanoate (2-oxoisovalerate), the penultimate precursor to L-isoleucine and L-valine, respectively. In Streptococcus pneumoniae serotype 2 (strain D39 / NCTC 7466), this protein is Dihydroxy-acid dehydratase.